We begin with the raw amino-acid sequence, 66 residues long: Large ribosomal subunit protein uL29 (66 aa).

This sequence belongs to the universal ribosomal protein uL29 family.

In Helicobacter pylori (strain Shi470), this protein is Large ribosomal subunit protein uL29.